The following is a 409-amino-acid chain: AP-1-like transcription factor YAP2 (409 aa).

Short sequence motifs (bipartite nuclear localization signal) lie at residues 17–24 and 47–54; these read MKKQMLLN and SRRTAQNR. The interval 26-64 is disordered; it reads DGTPKRKVGRPGRKRIDSEAKSRRTAQNRAAQRAFRDRK. One can recognise a bZIP domain in the interval 43 to 106; the sequence is SEAKSRRTAQ…KSLLSEITKY (64 aa). The basic motif stretch occupies residues 46 to 69; the sequence is KSRRTAQNRAAQRAFRDRKEAKMK. The tract at residues 71–99 is leucine-zipper; sequence LQERVELLEQKDAQNKTTTDFLLCSLKSL. A disordered region spans residues 127-156; it reads QKRENEKGTSTAVSKAAKELPSPNSDENMT. Residues 356-387 are c-CRD; it reads CYHILEEISSLPKYSSLDIDDLCSELIIKAKC. The Nuclear export signal motif lies at 372–379; sequence LDIDDLCS.

It belongs to the bZIP family. YAP subfamily. As to quaternary structure, homodimer; disulfide-linked, upon oxidation. Interacts in the nucleus with the nuclear export protein CRM1. Interacts with RCK1. Post-translationally, depending on the oxidative stress inducing agent, CAD1/YAP2 can undergo two distinct conformational changes, both through oxidation of cysteine residues, and both masking the nuclear export signal, thus abolishing nuclear export by CRM1/exportin 1. Peroxide stress induces the formation of possible intramolecular disulfide bonds as well as intermolcular disulfide within a homodimer. Cadmium may bind directly to specific cysteine residues (Cys-391 and either Cys-356 or Cys-387) in the c-CRD.

It localises to the cytoplasm. The protein resides in the nucleus. In terms of biological role, transcription activator involved in oxidative stress response and cadmium resistance. Regulates the transcription of genes overrepresented for the function of stabilizing proteins including the inducible Hsp90-family protein HSP82. Preferentially binds to promoters with the core binding site 5'-TTA[CG]TAA-3'. Activity of the transcription factor is controlled through oxidation of specific cysteine residues resulting in the alteration of its subcellular location. Activation by alkyl hydroperoxides or cadmium induces nuclear accumulation and as a result CAD1/YAP2 transcriptional activity. In Saccharomyces cerevisiae (strain ATCC 204508 / S288c) (Baker's yeast), this protein is AP-1-like transcription factor YAP2.